A 423-amino-acid chain; its full sequence is Imidazolonepropionase (423 aa).

Residues H78 and H80 each contribute to the Fe(3+) site. Zn(2+)-binding residues include H78 and H80. The 4-imidazolone-5-propanoate site is built by R87, Y150, and H183. Y150 provides a ligand contact to N-formimidoyl-L-glutamate. H247 provides a ligand contact to Fe(3+). H247 serves as a coordination point for Zn(2+). E250 contacts 4-imidazolone-5-propanoate. D322 is a Fe(3+) binding site. D322 is a binding site for Zn(2+). 2 residues coordinate N-formimidoyl-L-glutamate: N324 and G326. 4-imidazolone-5-propanoate is bound at residue S327.

This sequence belongs to the metallo-dependent hydrolases superfamily. HutI family. Requires Zn(2+) as cofactor. Fe(3+) serves as cofactor.

It localises to the cytoplasm. It catalyses the reaction 4-imidazolone-5-propanoate + H2O = N-formimidoyl-L-glutamate. It participates in amino-acid degradation; L-histidine degradation into L-glutamate; N-formimidoyl-L-glutamate from L-histidine: step 3/3. Functionally, catalyzes the hydrolytic cleavage of the carbon-nitrogen bond in imidazolone-5-propanoate to yield N-formimidoyl-L-glutamate. It is the third step in the universal histidine degradation pathway. The protein is Imidazolonepropionase of Bacillus cereus (strain G9842).